A 252-amino-acid polypeptide reads, in one-letter code: uncharacterized protein (252 aa).

The first 25 residues, 1 to 25 (MRKKKFLSRFAFGSLFLLCGTILSA), serve as a signal peptide directing secretion. Cysteine 26 carries the N-palmitoyl cysteine lipid modification. Cysteine 26 carries S-diacylglycerol cysteine lipidation.

It belongs to the MG439/MG440 family.

The protein resides in the cell membrane. This is an uncharacterized protein from Mycoplasma pneumoniae (strain ATCC 29342 / M129 / Subtype 1) (Mycoplasmoides pneumoniae).